Consider the following 755-residue polypeptide: Large structural phosphoprotein (755 aa).

Disordered stretches follow at residues 312–333 (ESSSKKTSHGSSFNPEPFIKTE) and 522–555 (QSFDDEHNEMSLPPQDQKSIKQKNGNKANSSTKT). The span at 535-555 (PQDQKSIKQKNGNKANSSTKT) shows a compositional bias: polar residues.

Belongs to the herpesviridae large structural phosphoprotein family. Post-translationally, phosphorylated at multiple sites.

The protein resides in the virion tegument. The polypeptide is Large structural phosphoprotein (U11) (Homo sapiens (Human)).